We begin with the raw amino-acid sequence, 257 residues long: Hydroxyacylglutathione hydrolase (257 aa).

Zn(2+) contacts are provided by H54, H56, D58, H59, H113, D137, and H175.

It belongs to the metallo-beta-lactamase superfamily. Glyoxalase II family. Monomer. Zn(2+) serves as cofactor.

The catalysed reaction is an S-(2-hydroxyacyl)glutathione + H2O = a 2-hydroxy carboxylate + glutathione + H(+). It functions in the pathway secondary metabolite metabolism; methylglyoxal degradation; (R)-lactate from methylglyoxal: step 2/2. Thiolesterase that catalyzes the hydrolysis of S-D-lactoyl-glutathione to form glutathione and D-lactic acid. In Synechocystis sp. (strain ATCC 27184 / PCC 6803 / Kazusa), this protein is Hydroxyacylglutathione hydrolase.